A 511-amino-acid chain; its full sequence is Histidine ammonia-lyase (511 aa).

The 5-imidazolinone (Ala-Gly) cross-link spans 142–144 (ASG). Ser-143 is modified (2,3-didehydroalanine (Ser)).

The protein belongs to the PAL/histidase family. In terms of processing, contains an active site 4-methylidene-imidazol-5-one (MIO), which is formed autocatalytically by cyclization and dehydration of residues Ala-Ser-Gly.

Its subcellular location is the cytoplasm. It carries out the reaction L-histidine = trans-urocanate + NH4(+). It functions in the pathway amino-acid degradation; L-histidine degradation into L-glutamate; N-formimidoyl-L-glutamate from L-histidine: step 1/3. The sequence is that of Histidine ammonia-lyase from Brucella suis biovar 1 (strain 1330).